The following is a 367-amino-acid chain: MLDDFKIDPLVKNKSPSSTTVVVAMSGGVDSSVAAALLHKLGYKVIGITLQLYNNTSGKGGCCGSTDTQDAKQVASSMGFPHYTLNYEKAFREEVIENFIDTYTQGKTPIPCVKCNQVIKFRDLLNTTKSLGADVLVTGHYIRKVEQDDEIYVYSSKDTKKDQSYFLFATTIEQLKFLRFPLGNFHKDNIRKLAKYFNLSVAAKPDSQNICFVTDTYKNTIAHLRPQTVKKGHIIDTNGNILGEHNGIVNFTIGQRRGIGLASKEPLYVTKLNPDTNEVTVGPKSALLQNKLHIEDINWLLKDKIPYSGLSVKVKLRSSHSGSTAIIYPNDMNKATVILQDTYCTVTPGQACVVYDGDRMLGGGWIC.

ATP contacts are provided by residues 24–31 (AMSGGVDS) and leucine 50. The Nucleophile role is filled by cysteine 115. A disulfide bond links cysteine 115 and cysteine 211. ATP is bound at residue glycine 139. The interval 161 to 163 (KDQ) is interaction with tRNA. Residue cysteine 211 is the Cysteine persulfide intermediate of the active site.

The protein belongs to the MnmA/TRMU family.

It localises to the cytoplasm. It carries out the reaction S-sulfanyl-L-cysteinyl-[protein] + uridine(34) in tRNA + AH2 + ATP = 2-thiouridine(34) in tRNA + L-cysteinyl-[protein] + A + AMP + diphosphate + H(+). In terms of biological role, catalyzes the 2-thiolation of uridine at the wobble position (U34) of tRNA, leading to the formation of s(2)U34. This chain is tRNA-specific 2-thiouridylase MnmA, found in Ehrlichia canis (strain Jake).